The sequence spans 144 residues: Large ribosomal subunit protein uL11 (144 aa).

Belongs to the universal ribosomal protein uL11 family. In terms of assembly, part of the ribosomal stalk of the 50S ribosomal subunit. Interacts with L10 and the large rRNA to form the base of the stalk. L10 forms an elongated spine to which L12 dimers bind in a sequential fashion forming a multimeric L10(L12)X complex. One or more lysine residues are methylated.

Forms part of the ribosomal stalk which helps the ribosome interact with GTP-bound translation factors. The polypeptide is Large ribosomal subunit protein uL11 (Neisseria meningitidis serogroup B (strain ATCC BAA-335 / MC58)).